Consider the following 501-residue polypeptide: Aldehyde dehydrogenase 1A1 (501 aa).

S2 carries the post-translational modification N-acetylserine. N6-acetyllysine occurs at positions 91 and 128. NAD(+) is bound by residues 167 to 170, 193 to 196, 226 to 227, and 246 to 247; these read IPWN, KPAE, GP, and GS. The residue at position 252 (K252) is an N6-acetyllysine. E269 (proton acceptor) is an active-site residue. 269 to 271 lines the NAD(+) pocket; the sequence is ELG. Residue C303 is the Nucleophile of the active site. The tract at residues 336–501 is mediates interaction with PRMT3; sequence LTPGINQGPQ…VAMKISQKNS (166 aa). T337 carries the post-translational modification Phosphothreonine. 349–353 provides a ligand contact to NAD(+); that stretch reads EQHDK. N6-acetyllysine is present on residues K353 and K367. NAD(+) is bound at residue 400-402; it reads EIF. N6-acetyllysine is present on K410. Position 413 is a phosphoserine (S413). An N6-acetyllysine mark is found at K419, K435, and K495.

It belongs to the aldehyde dehydrogenase family. As to quaternary structure, homotetramer. Interacts with PRMT3; the interaction is direct, inhibits ALDH1A1 aldehyde dehydrogenase activity and is independent of the methyltransferase activity of PRMT3. Post-translationally, the N-terminus is blocked most probably by acetylation. As to expression, expressed in retina. Expressed in lens and cornea (at protein level). Expressed by midbrain dopamine neurons.

It is found in the cytoplasm. Its subcellular location is the cytosol. The protein localises to the cell projection. The protein resides in the axon. The enzyme catalyses an aldehyde + NAD(+) + H2O = a carboxylate + NADH + 2 H(+). The catalysed reaction is all-trans-retinal + NAD(+) + H2O = all-trans-retinoate + NADH + 2 H(+). It catalyses the reaction 9-cis-retinal + NAD(+) + H2O = 9-cis-retinoate + NADH + 2 H(+). It carries out the reaction 11-cis-retinal + NAD(+) + H2O = 11-cis-retinoate + NADH + 2 H(+). The enzyme catalyses 13-cis-retinal + NAD(+) + H2O = 13-cis-retinoate + NADH + 2 H(+). The catalysed reaction is 4-aminobutanal + NAD(+) + H2O = 4-aminobutanoate + NADH + 2 H(+). It catalyses the reaction 3-deoxyglucosone + NAD(+) + H2O = 2-dehydro-3-deoxy-D-gluconate + NADH + 2 H(+). It carries out the reaction (E)-4-hydroxynon-2-enal + NAD(+) + H2O = (E)-4-hydroxynon-2-enoate + NADH + 2 H(+). The enzyme catalyses malonaldehyde + NAD(+) + H2O = 3-oxopropanoate + NADH + 2 H(+). The catalysed reaction is hexanal + NAD(+) + H2O = hexanoate + NADH + 2 H(+). It catalyses the reaction propanal + NAD(+) + H2O = propanoate + NADH + 2 H(+). It carries out the reaction acetaldehyde + NAD(+) + H2O = acetate + NADH + 2 H(+). The enzyme catalyses benzaldehyde + NAD(+) + H2O = benzoate + NADH + 2 H(+). It participates in cofactor metabolism; retinol metabolism. With respect to regulation, the aminobutyraldehyde dehydrogenase activity is negatively regulated by ethanol in vivo. Functionally, cytosolic dehydrogenase that catalyzes the irreversible oxidation of a wide range of aldehydes to their corresponding carboxylic acid. Functions downstream of retinol dehydrogenases and catalyzes the oxidation of retinaldehyde into retinoic acid, the second step in the oxidation of retinol/vitamin A into retinoic acid. This pathway is crucial to control the levels of retinol and retinoic acid, two important molecules which excess can be teratogenic and cytotoxic. Also oxidizes aldehydes resulting from lipid peroxidation like (E)-4-hydroxynon-2-enal/HNE, malonaldehyde and hexanal that form protein adducts and are highly cytotoxic. By participating for instance to the clearance of (E)-4-hydroxynon-2-enal/HNE in the lens epithelium prevents the formation of HNE-protein adducts and lens opacification. Also functions downstream of fructosamine-3-kinase in the fructosamine degradation pathway by catalyzing the oxidation of 3-deoxyglucosone, the carbohydrate product of fructosamine 3-phosphate decomposition, which is itself a potent glycating agent that may react with lysine and arginine side-chains of proteins. Also has an aminobutyraldehyde dehydrogenase activity and is probably part of an alternative pathway for the biosynthesis of GABA/4-aminobutanoate in midbrain, thereby playing a role in GABAergic synaptic transmission. The polypeptide is Aldehyde dehydrogenase 1A1 (Mus musculus (Mouse)).